The chain runs to 188 residues: UPF0157 protein DR_2534 (188 aa).

Over residues 1–12 (MGRGGRGVGGGR) the composition is skewed to gly residues. The tract at residues 1–37 (MGRGGRGVGGGRPEGHGASVEGGRTRQTEGMDLISPD) is disordered.

It belongs to the UPF0157 (GrpB) family.

This chain is UPF0157 protein DR_2534, found in Deinococcus radiodurans (strain ATCC 13939 / DSM 20539 / JCM 16871 / CCUG 27074 / LMG 4051 / NBRC 15346 / NCIMB 9279 / VKM B-1422 / R1).